The following is a 496-amino-acid chain: Solute carrier family 2, facilitated glucose transporter member 3 (496 aa).

Over methionine 1–leucine 10 the chain is Cytoplasmic. The chain crosses the membrane as a helical span at residues isoleucine 11–asparagine 32. Residues alanine 33–serine 64 lie on the Extracellular side of the membrane. Asparagine 43 carries an N-linked (GlcNAc...) asparagine glycan. The chain crosses the membrane as a helical span at residues leucine 65–valine 85. Residues asparagine 86–arginine 90 are Cytoplasmic-facing. The helical transmembrane segment at arginine 91–cysteine 111 threads the bilayer. Residues lysine 112–glutamate 118 lie on the Extracellular side of the membrane. The chain crosses the membrane as a helical span at residues methionine 119–isoleucine 142. The Cytoplasmic portion of the chain corresponds to glycine 143 to alanine 153. A helical transmembrane segment spans residues phenylalanine 154–leucine 174. Glutamine 159 provides a ligand contact to D-glucose. Residues glutamate 175 to leucine 183 lie on the Extracellular side of the membrane. Residues tryptophan 184 to phenylalanine 204 form a helical membrane-spanning segment. Residues cysteine 205–proline 269 lie on the Cytoplasmic side of the membrane. Threonine 232 carries the phosphothreonine modification. The chain crosses the membrane as a helical span at residues isoleucine 270–tyrosine 290. An important for selectivity against fructose region spans residues glutamine 277–serine 279. Residues glutamine 280–glutamine 281 and asparagine 286 contribute to the D-glucose site. Residues tyrosine 291–proline 304 are Extracellular-facing. A helical membrane pass occupies residues isoleucine 305–leucine 325. Residue asparagine 315 coordinates D-glucose. At valine 326–arginine 331 the chain is on the cytoplasmic side. The chain crosses the membrane as a helical span at residues arginine 332–serine 352. Over leucine 353–serine 363 the chain is Extracellular. The chain crosses the membrane as a helical span at residues phenylalanine 364–valine 389. Residues glutamate 378 and tryptophan 386 each contribute to the D-glucose site. Residues alanine 390–proline 399 lie on the Cytoplasmic side of the membrane. A helical transmembrane segment spans residues alanine 400–phenylalanine 420. The Extracellular segment spans residues proline 421 to alanine 429. Residues tyrosine 430–valine 450 traverse the membrane as a helical segment. The Cytoplasmic portion of the chain corresponds to proline 451 to valine 496. A phosphoserine mark is found at serine 475 and serine 485. Threonine 492 is modified (phosphothreonine).

Belongs to the major facilitator superfamily. Sugar transporter (TC 2.A.1.1) family. Glucose transporter subfamily. Interacts with SMIM43; the interaction may promote SLC2A3-mediated glucose transport to meet the energy needs of mesendoderm differentiation. In terms of tissue distribution, highly expressed in brain. Expressed in many tissues.

It is found in the cell membrane. It localises to the perikaryon. Its subcellular location is the cell projection. It carries out the reaction D-glucose(out) = D-glucose(in). The catalysed reaction is D-galactose(in) = D-galactose(out). Its activity is regulated as follows. Deoxyglucose transport is inhibited by D-glucose, D-galactose and maltose. Galactose transport is inhibited by D-glucose and maltose. In terms of biological role, facilitative glucose transporter. Can also mediate the uptake of various other monosaccharides across the cell membrane. Mediates the uptake of glucose, 2-deoxyglucose, galactose, mannose, xylose and fucose, and probably also dehydroascorbate. Does not mediate fructose transport. Required for mesendoderm differentiation. This is Solute carrier family 2, facilitated glucose transporter member 3 from Homo sapiens (Human).